We begin with the raw amino-acid sequence, 145 residues long: Bacilliredoxin SAOUHSC_01610 (145 aa).

The protein belongs to the bacilliredoxin family.

The chain is Bacilliredoxin SAOUHSC_01610 from Staphylococcus aureus (strain NCTC 8325 / PS 47).